Here is an 86-residue protein sequence, read N- to C-terminus: Large ribosomal subunit protein bL27 (86 aa).

Positions 1–21 (MAHKKGASSSRNGRDSAAQRL) are disordered.

It belongs to the bacterial ribosomal protein bL27 family.

The protein is Large ribosomal subunit protein bL27 (rpmA) of Mycobacterium tuberculosis (strain CDC 1551 / Oshkosh).